The sequence spans 24 residues: Ascaphin-2 (24 aa).

Expressed by the skin glands.

It is found in the secreted. Functionally, antimicrobial peptide that shows higher potency against Gram-negative bacteria than against Gram-positive bacteria. Has a very week hemolytic activity. This Ascaphus truei (Coastal tailed frog) protein is Ascaphin-2.